Reading from the N-terminus, the 68-residue chain is Conotoxin reg3.14 (68 aa).

An N-terminal signal peptide occupies residues 1–22 (MMSKLGVLLTICLLLFPLSVLP). The propeptide occupies 23–52 (LDGDQPADQPAERMQDISAEQNPWFDPVKR). Intrachain disulfides connect Cys-53-Cys-68, Cys-54-Cys-64, and Cys-59-Cys-67.

This sequence belongs to the conotoxin M superfamily. In terms of tissue distribution, expressed by the venom duct.

The protein localises to the secreted. The polypeptide is Conotoxin reg3.14 (Conus regius (Crown cone)).